A 248-amino-acid polypeptide reads, in one-letter code: Ubiquinone/menaquinone biosynthesis C-methyltransferase UbiE (248 aa).

The S-adenosyl-L-methionine site is built by Ser-68 and Asp-92.

The protein belongs to the class I-like SAM-binding methyltransferase superfamily. MenG/UbiE family.

It catalyses the reaction a 2-demethylmenaquinol + S-adenosyl-L-methionine = a menaquinol + S-adenosyl-L-homocysteine + H(+). It carries out the reaction a 2-methoxy-6-(all-trans-polyprenyl)benzene-1,4-diol + S-adenosyl-L-methionine = a 5-methoxy-2-methyl-3-(all-trans-polyprenyl)benzene-1,4-diol + S-adenosyl-L-homocysteine + H(+). It functions in the pathway quinol/quinone metabolism; menaquinone biosynthesis; menaquinol from 1,4-dihydroxy-2-naphthoate: step 2/2. The protein operates within cofactor biosynthesis; ubiquinone biosynthesis. In terms of biological role, methyltransferase required for the conversion of demethylmenaquinol (DMKH2) to menaquinol (MKH2) and the conversion of 2-polyprenyl-6-methoxy-1,4-benzoquinol (DDMQH2) to 2-polyprenyl-3-methyl-6-methoxy-1,4-benzoquinol (DMQH2). The sequence is that of Ubiquinone/menaquinone biosynthesis C-methyltransferase UbiE from Rickettsia conorii (strain ATCC VR-613 / Malish 7).